We begin with the raw amino-acid sequence, 387 residues long: Cytochrome b (387 aa).

A run of 4 helical transmembrane segments spans residues 32–52, 76–98, 113–133, and 179–199; these read FGSL…LLAC, FLLR…LHIG, TWNI…LGYC, and FFSL…MHLI. Heme b is bound by residues His82 and His96. 2 residues coordinate heme b: His183 and His197. Position 202 (His202) interacts with a ubiquinone. 4 helical membrane-spanning segments follow: residues 225–245, 289–309, 321–341, and 348–368; these read FLIK…YMVF, QLGV…PLLD, MGKF…WIGG, and FITI…ILIP.

This sequence belongs to the cytochrome b family. In terms of assembly, fungal cytochrome b-c1 complex contains 10 subunits; 3 respiratory subunits, 2 core proteins and 5 low-molecular weight proteins. Cytochrome b-c1 complex is a homodimer. It depends on heme b as a cofactor.

It is found in the mitochondrion inner membrane. Functionally, component of the ubiquinol-cytochrome c reductase complex (complex III or cytochrome b-c1 complex) that is part of the mitochondrial respiratory chain. The b-c1 complex mediates electron transfer from ubiquinol to cytochrome c. Contributes to the generation of a proton gradient across the mitochondrial membrane that is then used for ATP synthesis. In Schizosaccharomyces octosporus (Fission yeast), this protein is Cytochrome b (cob).